A 368-amino-acid chain; its full sequence is Anhydro-N-acetylmuramic acid kinase (368 aa).

Gly11–Asp18 is an ATP binding site.

Belongs to the anhydro-N-acetylmuramic acid kinase family.

It carries out the reaction 1,6-anhydro-N-acetyl-beta-muramate + ATP + H2O = N-acetyl-D-muramate 6-phosphate + ADP + H(+). It functions in the pathway amino-sugar metabolism; 1,6-anhydro-N-acetylmuramate degradation. The protein operates within cell wall biogenesis; peptidoglycan recycling. Functionally, catalyzes the specific phosphorylation of 1,6-anhydro-N-acetylmuramic acid (anhMurNAc) with the simultaneous cleavage of the 1,6-anhydro ring, generating MurNAc-6-P. Is required for the utilization of anhMurNAc either imported from the medium or derived from its own cell wall murein, and thus plays a role in cell wall recycling. The sequence is that of Anhydro-N-acetylmuramic acid kinase from Sulfurimonas denitrificans (strain ATCC 33889 / DSM 1251) (Thiomicrospira denitrificans (strain ATCC 33889 / DSM 1251)).